A 37-amino-acid polypeptide reads, in one-letter code: Photosystem I reaction center subunit VIII (37 aa).

Residues 10-30 traverse the membrane as a helical segment; sequence IFVPLVGLVFPAIAMASLSLY.

The protein belongs to the PsaI family.

Its subcellular location is the plastid. It localises to the chloroplast thylakoid membrane. Its function is as follows. May help in the organization of the PsaL subunit. This is Photosystem I reaction center subunit VIII from Gossypium hirsutum (Upland cotton).